The chain runs to 411 residues: MDAALLHSLLEANCSLALAEELLLDGWGPPLDPEGPYSYCNTTLDQIGTCWPRSAAGALVERPCPEYFNGVKYNTTRNAYRECLENGTWASKINYSQCEPILDDKQRKYDLHYRIALVVNYLGHCVSVAALVAAFLLFLALRSIRCLRNVIHWNLITTFILRNVMWFLLQLVDHEVHESNEVWCRCITTIFNYFVVTNFFWMFVEGCYLHTAIVMTYSTERLRKCLFLFIGWCIPFPIIVAWAIGKLYYENEQCWFGKEPGDLVDYIYQGPIILVLLINFVFLFNIVRILMTKLRASTTSETIQYRKAVKATLVLLPLLGITYMLFFVNPGEDDLSQIMFIYFNSFLQSFQGFFVSVFYCFFNGEVRSAVRKRWHRWQDHHSLRVPMARAMSIPTSPTRISFHSIKQTAAV.

A signal peptide (not cleaved) is located at residues 1 to 19 (MDAALLHSLLEANCSLALA). Over 1–108 (MDAALLHSLL…EPILDDKQRK (108 aa)) the chain is Extracellular. 5 N-linked (GlcNAc...) asparagine glycosylation sites follow: Asn13, Asn41, Asn74, Asn86, and Asn94. Cystine bridges form between Cys14–Cys50, Cys40–Cys83, Trp51–Arg77, and Cys64–Cys98. The chain crosses the membrane as a helical span at residues 109 to 139 (YDLHYRIALVVNYLGHCVSVAALVAAFLLFL). Residues 140-146 (ALRSIRC) lie on the Cytoplasmic side of the membrane. Residues 147–171 (LRNVIHWNLITTFILRNVMWFLLQL) form a helical membrane-spanning segment. Over 172 to 185 (VDHEVHESNEVWCR) the chain is Extracellular. A disulfide bridge connects residues Cys184 and Cys254. Residues 186–214 (CITTIFNYFVVTNFFWMFVEGCYLHTAIV) traverse the membrane as a helical segment. Over 215 to 221 (MTYSTER) the chain is Cytoplasmic. A helical membrane pass occupies residues 222–249 (LRKCLFLFIGWCIPFPIIVAWAIGKLYY). Topologically, residues 250–265 (ENEQCWFGKEPGDLVD) are extracellular. Residues 266–291 (YIYQGPIILVLLINFVFLFNIVRILM) form a helical membrane-spanning segment. Residues 292–302 (TKLRASTTSET) are Cytoplasmic-facing. A helical transmembrane segment spans residues 303–327 (IQYRKAVKATLVLLPLLGITYMLFF). The Extracellular portion of the chain corresponds to 328-334 (VNPGEDD). Residues 335-364 (LSQIMFIYFNSFLQSFQGFFVSVFYCFFNG) traverse the membrane as a helical segment. The Cytoplasmic segment spans residues 365 to 411 (EVRSAVRKRWHRWQDHHSLRVPMARAMSIPTSPTRISFHSIKQTAAV).

This sequence belongs to the G-protein coupled receptor 2 family. In terms of assembly, monomer. Interacts (via N-terminal extracellular domain) with CRF, UCN, UCN2 and UCN3. Has highest affinity for UCN, and considerably lower affinity for CRF, UNC2 and UCN3. An N-glycosylation site within the signal peptide impedes its proper cleavage and function.

The protein resides in the cell membrane. In terms of biological role, G-protein coupled receptor for CRH (corticotropin-releasing factor), UCN (urocortin), UCN2 and UCN3. Has high affinity for UCN. Ligand binding causes a conformation change that triggers signaling via guanine nucleotide-binding proteins (G proteins) and down-stream effectors, such as adenylate cyclase. Promotes the activation of adenylate cyclase, leading to increased intracellular cAMP levels. The chain is Corticotropin-releasing factor receptor 2 (CRHR2) from Homo sapiens (Human).